A 697-amino-acid polypeptide reads, in one-letter code: Elongation factor G (697 aa).

Residues 10–285 form the tr-type G domain; sequence ERTRNIGIMA…AVVDYLPSPL (276 aa). GTP is bound by residues 19-26, 83-87, and 137-140; these read AHIDAGKT, DTPGH, and NKMD.

It belongs to the TRAFAC class translation factor GTPase superfamily. Classic translation factor GTPase family. EF-G/EF-2 subfamily.

Its subcellular location is the cytoplasm. Its function is as follows. Catalyzes the GTP-dependent ribosomal translocation step during translation elongation. During this step, the ribosome changes from the pre-translocational (PRE) to the post-translocational (POST) state as the newly formed A-site-bound peptidyl-tRNA and P-site-bound deacylated tRNA move to the P and E sites, respectively. Catalyzes the coordinated movement of the two tRNA molecules, the mRNA and conformational changes in the ribosome. This is Elongation factor G from Pediococcus pentosaceus (strain ATCC 25745 / CCUG 21536 / LMG 10740 / 183-1w).